A 568-amino-acid chain; its full sequence is Kelch-like protein 12 (568 aa).

A BTB domain is found at C33–V100. In terms of domain architecture, BACK spans C135 to I236. Kelch repeat units lie at residues V282 to D329, I331 to D379, M380 to G426, V427 to D473, I475 to G520, and L522 to E567. Residues Q405–K568 are interaction with DVL3.

As to quaternary structure, component of the BCR(KLHL12) E3 ubiquitin ligase complex, at least composed of CUL3 and KLHL12 and RBX1. This complex interacts with DVL3 upon activation of the Wnt signaling pathway by WNT3A. Interacts with DRD4, KLHL2 and SEC31A. Interacts with PEF1 and PDCD6/ALG-2; interaction takes place in response to cytosolic calcium increase and leads to bridge together the BCR(KLHL12) complex and SEC31 (SEC31A or SEC31B). Post-translationally, ubiquitinated by the SCF(FBXL17) complex, leading to its degradation by the proteasome: ubiquitination by the SCF(FBXL17) complex takes place when aberrant BTB domain dimers are formed. Ubiquitously expressed. Highly expressed in testis and at lower levels in the submandibular salivary gland.

The protein localises to the cytoplasmic vesicle. It is found in the COPII-coated vesicle. The protein operates within protein modification; protein ubiquitination. Functionally, substrate-specific adapter of a BCR (BTB-CUL3-RBX1) E3 ubiquitin ligase complex that acts as a negative regulator of Wnt signaling pathway and ER-Golgi transport. The BCR(KLHL12) complex is involved in ER-Golgi transport by regulating the size of COPII coats, thereby playing a key role in collagen export, which is required for embryonic stem (ES) cells division: BCR(KLHL12) acts by mediating monoubiquitination of SEC31 (SEC31A or SEC31B). The BCR(KLHL12) complex is also involved in neural crest specification: in response to cytosolic calcium increase, interacts with the heterodimer formed with PEF1 and PDCD6/ALG-2, leading to bridge together the BCR(KLHL12) complex and SEC31 (SEC31A or SEC31B), promoting monoubiquitination of SEC31 and subsequent collagen export. As part of the BCR(KLHL12) complex, also acts as a negative regulator of the Wnt signaling pathway by mediating ubiquitination and subsequent proteolysis of DVL3. The BCR(KLHL12) complex also mediates polyubiquitination of DRD4 and PEF1, without leading to degradation of these proteins. This Homo sapiens (Human) protein is Kelch-like protein 12 (KLHL12).